A 992-amino-acid chain; its full sequence is Sorting nexin-19 (992 aa).

One can recognise a PXA domain in the interval 95 to 272 (ERQLEREINR…VLVGIFSKAR (178 aa)). The segment at 410-442 (ALEPKDGEASEGAEAEEGPGTETETGLPVSTLN) is disordered. The span at 418–428 (ASEGAEAEEGP) shows a compositional bias: acidic residues. One can recognise a PX domain in the interval 533–663 (LRITGTITAR…EFLALNTDAR (131 aa)). Positions 582 and 629 each coordinate a 1,2-diacyl-sn-glycero-3-phospho-(1D-myo-inositol-3-phosphate). 3 disordered regions span residues 692–726 (FPRSEPQSPTEELSEAETESKPQTEGKKASKSRLR), 778–797 (QPTKAPEKDPEQPPKGRVDS), and 973–992 (AATTSASDTPGNSKRMGVSS). Composition is skewed to basic and acidic residues over residues 709–719 (TESKPQTEGKK) and 782–795 (APEKDPEQPPKGRV). Positions 980–992 (DTPGNSKRMGVSS) are enriched in polar residues.

This sequence belongs to the sorting nexin family. As to quaternary structure, interacts with PTPRN.

The protein localises to the early endosome membrane. It localises to the cytoplasmic vesicle membrane. Functionally, plays a role in intracellular vesicle trafficking and exocytosis. May play a role in maintaining insulin-containing dense core vesicles in pancreatic beta-cells and in preventing their degradation. May play a role in insulin secretion. Interacts with membranes containing phosphatidylinositol 3-phosphate (PtdIns(3P)). The polypeptide is Sorting nexin-19 (SNX19) (Homo sapiens (Human)).